A 778-amino-acid polypeptide reads, in one-letter code: MSNHHSKTKKTSMLGREDYIYSHDITNKNKKEKLNGASKNNDYNQDDDDETMKSKMMDFCDKTTAHGAKRVLIARNSFSKLMWGLIIFSFLLMFAYQASKLIFKFSAHEKITDISLKFDDVEFPAITFCNLNPYKKSLVMMVPSIRDTMDVYDNAKTHSKSEGEKKKPKVSRKQHSDASQQMVRELFAKEIEEGMVELKKSNKTLQSQNKSGRRRSQRSIENRRYEAIEAHCKCVGNIGMECIRFESPPRDPSSKCICTYDRDMEVAWPCFNISVWYDHECPLCHDDGYCESTLPSGTTSSDKWPCMCRNRGDTSERDDTPYCIGKAGVGKIEIRKLWLENNMTTTSTTTTTTTTPPPTTTSTTTTTTTTPPPTTTARPNQRAIVSNPETIKAMGFQGMTDGVAMLTRAKENLMFTMAALSDKQRIALSQSKHEFIEMCSFNGKECDIDEDFRLHVDPEFGNCFTFNYDVNNNYTSSRAGPMYGIRVLLFVNTSDYMSTSESSGVRLAIHPPTEYPFPDTFGYSAPVGFASSFGIKKKVMQRLPAPYGECVETKKVVDRNYIYAGYDYHPEGCHRSCFQNGLIDDCSCGDPRFPVPEGYRHCSAFNATARTCLEKNIGSVGDFHHITQKMDKCVCKQSCEEIIHEVTFSCSKWPSGATDLGDCDGMTESECEQYYRLNAAMIEVFYEQLNYELLQESEAYGLVNLIADFGGHLGLWLGFSVITVMEVCVLLVDMISLFFKSRHEEKLLRQSTKRKDVPEDKRQITVGSGRKSDAFVSI.

The Cytoplasmic portion of the chain corresponds to 1–82; that stretch reads MSNHHSKTKK…IARNSFSKLM (82 aa). A helical transmembrane segment spans residues 83–103; that stretch reads WGLIIFSFLLMFAYQASKLIF. At 104–711 the chain is on the extracellular side; the sequence is KFSAHEKITD…LVNLIADFGG (608 aa). Residues 154 to 165 are compositionally biased toward basic and acidic residues; the sequence is NAKTHSKSEGEK. Disordered regions lie at residues 154-180 and 201-220; these read NAKTHSKSEGEKKKPKVSRKQHSDASQ and SNKTLQSQNKSGRRRSQRSI. N-linked (GlcNAc...) asparagine glycans are attached at residues Asn202, Asn209, Asn272, and Asn342. Low complexity predominate over residues 346-369; the sequence is TSTTTTTTTTPPPTTTSTTTTTTT. Positions 346-380 are disordered; that stretch reads TSTTTTTTTTPPPTTTSTTTTTTTTPPPTTTARPN. Asn473, Asn492, and Asn606 each carry an N-linked (GlcNAc...) asparagine glycan. A helical membrane pass occupies residues 712–732; it reads HLGLWLGFSVITVMEVCVLLV. Residues 733–778 lie on the Cytoplasmic side of the membrane; the sequence is DMISLFFKSRHEEKLLRQSTKRKDVPEDKRQITVGSGRKSDAFVSI.

Belongs to the amiloride-sensitive sodium channel (TC 1.A.6) family.

The protein localises to the membrane. Its function is as follows. Probable sodium channel subunit. Required by a subset of neurons. This Caenorhabditis elegans protein is Degenerin deg-1.